Reading from the N-terminus, the 201-residue chain is Glycerol-3-phosphate acyltransferase (201 aa).

The next 5 membrane-spanning stretches (helical) occupy residues alanine 10 to isoleucine 30, proline 59 to alanine 79, alanine 87 to phenylalanine 107, phenylalanine 116 to leucine 136, and isoleucine 161 to isoleucine 181.

Belongs to the PlsY family. As to quaternary structure, probably interacts with PlsX.

It localises to the cell inner membrane. The enzyme catalyses an acyl phosphate + sn-glycerol 3-phosphate = a 1-acyl-sn-glycero-3-phosphate + phosphate. It participates in lipid metabolism; phospholipid metabolism. Its function is as follows. Catalyzes the transfer of an acyl group from acyl-phosphate (acyl-PO(4)) to glycerol-3-phosphate (G3P) to form lysophosphatidic acid (LPA). This enzyme utilizes acyl-phosphate as fatty acyl donor, but not acyl-CoA or acyl-ACP. The chain is Glycerol-3-phosphate acyltransferase from Cereibacter sphaeroides (strain ATCC 17029 / ATH 2.4.9) (Rhodobacter sphaeroides).